Reading from the N-terminus, the 744-residue chain is Elongation factor G, mitochondrial (744 aa).

Positions E39–G316 constitute a tr-type G domain. Residues A48–T55, D115–H119, and N169–D172 each bind GTP. Residues V725–S735 are compositionally biased toward polar residues. A disordered region spans residues V725–N744.

Belongs to the TRAFAC class translation factor GTPase superfamily. Classic translation factor GTPase family. EF-G/EF-2 subfamily.

The protein resides in the mitochondrion. It functions in the pathway protein biosynthesis; polypeptide chain elongation. Mitochondrial GTPase that catalyzes the GTP-dependent ribosomal translocation step during translation elongation. During this step, the ribosome changes from the pre-translocational (PRE) to the post-translocational (POST) state as the newly formed A-site-bound peptidyl-tRNA and P-site-bound deacylated tRNA move to the P and E sites, respectively. Catalyzes the coordinated movement of the two tRNA molecules, the mRNA and conformational changes in the ribosome. Essential during development as it acts as a retrograde signal from mitochondria to the nucleus to slow down cell proliferation if mitochondrial energy output is low. The chain is Elongation factor G, mitochondrial from Drosophila pseudoobscura pseudoobscura (Fruit fly).